Here is a 500-residue protein sequence, read N- to C-terminus: Betaine aldehyde dehydrogenase, chloroplastic (500 aa).

The N-terminal 7 residues, 1 to 7, are a transit peptide targeting the chloroplast; the sequence is MSMPIPS. 238–243 contacts NAD(+); that stretch reads GSSATG. E260 serves as the catalytic Proton acceptor. Catalysis depends on C294, which acts as the Nucleophile.

Belongs to the aldehyde dehydrogenase family. In terms of assembly, homodimer.

The protein localises to the plastid. The protein resides in the chloroplast. The enzyme catalyses betaine aldehyde + NAD(+) + H2O = glycine betaine + NADH + 2 H(+). The protein operates within amine and polyamine biosynthesis; betaine biosynthesis via choline pathway; betaine from betaine aldehyde: step 1/1. This chain is Betaine aldehyde dehydrogenase, chloroplastic, found in Beta vulgaris (Sugar beet).